The sequence spans 272 residues: MARLAAFDMDGTLLMPDHHLGEKTLSTLARLRERDITLTFATGRHALEMQHILGAISLDAYLITGNGTRVHSLEGELLHRDDLPADVAELVLYQQWDTRASMHIFNDDGWFTGKEIPALLQAFVYSGFRYQIIDVKKMPLGSVTKICFCGDHDDLTRLQIQLHEALGERAHLCFSATDCLEVLPVGCNKGAALTVLTQHLGLSLRDCMAFGDAMNDREMLGSVGSGFIMGNAMPQLRAELPHLPVIGHCRNQAVSHYLTHWLDYPHLPYSPE.

Residue Asp-8 is the Nucleophile of the active site. The Mg(2+) site is built by Asp-8, Asp-10, and Asp-212.

The protein belongs to the HAD-like hydrolase superfamily. Cof family. It depends on Mg(2+) as a cofactor.

It carries out the reaction 4-amino-2-methyl-5-(diphosphooxymethyl)pyrimidine + H2O = 4-amino-2-methyl-5-(phosphooxymethyl)pyrimidine + phosphate + H(+). In terms of biological role, catalyzes the hydrolysis of 4-amino-2-methyl-5-hydroxymethylpyrimidine pyrophosphate (HMP-PP) to 4-amino-2-methyl-5-hydroxymethylpyrimidine phosphate (HMP-P). The chain is HMP-PP phosphatase from Escherichia coli O157:H7.